The sequence spans 465 residues: ATP synthase subunit beta (465 aa).

148–155 (GGAGVGKT) is a binding site for ATP.

The protein belongs to the ATPase alpha/beta chains family. In terms of assembly, F-type ATPases have 2 components, CF(1) - the catalytic core - and CF(0) - the membrane proton channel. CF(1) has five subunits: alpha(3), beta(3), gamma(1), delta(1), epsilon(1). CF(0) has three main subunits: a(1), b(2) and c(9-12). The alpha and beta chains form an alternating ring which encloses part of the gamma chain. CF(1) is attached to CF(0) by a central stalk formed by the gamma and epsilon chains, while a peripheral stalk is formed by the delta and b chains.

It is found in the cell inner membrane. It carries out the reaction ATP + H2O + 4 H(+)(in) = ADP + phosphate + 5 H(+)(out). In terms of biological role, produces ATP from ADP in the presence of a proton gradient across the membrane. The catalytic sites are hosted primarily by the beta subunits. The chain is ATP synthase subunit beta from Neisseria meningitidis serogroup C (strain 053442).